A 129-amino-acid chain; its full sequence is Glycine cleavage system H protein (129 aa).

Residues 24–106 (TYTVGITEHA…YADGWIFKIK (83 aa)) enclose the Lipoyl-binding domain. K65 bears the N6-lipoyllysine mark.

It belongs to the GcvH family. In terms of assembly, the glycine cleavage system is composed of four proteins: P, T, L and H. It depends on (R)-lipoate as a cofactor.

In terms of biological role, the glycine cleavage system catalyzes the degradation of glycine. The H protein shuttles the methylamine group of glycine from the P protein to the T protein. The polypeptide is Glycine cleavage system H protein (Salmonella arizonae (strain ATCC BAA-731 / CDC346-86 / RSK2980)).